The following is a 450-amino-acid chain: MSWIQIPWSWVVTLIVTYLSLPLIIYYLVPYIFYGNKSSKKRIIIYVLGDIGHSPRMCYHARSFSEKGWQVELCGYVEEQVPGFIAEDPNIIVHALPTLTLQGNKRSIIFLVKKVLFQVSAIIAQLWELRGSNYMLIQNPPSIPILPIAVFYRLSGCKLIIDWHNLAYSIMQLKFNGNFYHPVVLASYVIEYIFGKFATYNLTVTEAMKEYLVNSFGLNPKRCVVLYDRPATQFKPLTESESRTKLLDSEFIRDMIPEGFNVEKGDKIIVTSTSFTPDEDISILIGALKIYDNSYENLDKSLPKILCFVTGKGPMKERYVKDVEEHDWQHVYVKFVWLKSEDYPRLLQLCDYGVSLHKSSSGLDLPMKILDMYGSGIPVIAYNYPVLGELVKYNENGLKFLDRRELHESLIFAMKDPELYKKLKQGALKESQIRWNSSWQSAMQELKLVA.

At 1 to 13 (MSWIQIPWSWVVT) the chain is on the lumenal side. Residues 14–34 (LIVTYLSLPLIIYYLVPYIFY) traverse the membrane as a helical segment. Residues 35 to 106 (GNKSSKKRII…PTLTLQGNKR (72 aa)) lie on the Cytoplasmic side of the membrane. The segment at residues 107–127 (SIIFLVKKVLFQVSAIIAQLW) is an intramembrane region (helical). Residues 128-450 (ELRGSNYMLI…SAMQELKLVA (323 aa)) lie on the Cytoplasmic side of the membrane.

This sequence belongs to the glycosyltransferase group 1 family.

The protein resides in the endoplasmic reticulum membrane. The enzyme catalyses an N,N'-diacetylchitobiosyl-diphospho-di-trans,poly-cis-dolichol + GDP-alpha-D-mannose = a beta-D-Man-(1-&gt;4)-beta-D-GlcNAc-(1-&gt;4)-alpha-D-GlcNAc-diphospho-di-trans,poly-cis-dolichol + GDP + H(+). Its pathway is protein modification; protein glycosylation. Functionally, participates in the formation of the lipid-linked precursor oligosaccharide for N-glycosylation. Involved in assembling the dolichol-pyrophosphate-GlcNAc(2)-Man(5) intermediate on the cytoplasmic surface of the ER. The chain is Chitobiosyldiphosphodolichol beta-mannosyltransferase (ALG1) from Candida glabrata (strain ATCC 2001 / BCRC 20586 / JCM 3761 / NBRC 0622 / NRRL Y-65 / CBS 138) (Yeast).